A 295-amino-acid polypeptide reads, in one-letter code: Non-selective voltage-gated ion channel VDAC2 (295 aa).

Residues Lys-24 and Lys-32 each coordinate ATP. The residue at position 32 (Lys-32) is an N6-acetyllysine; alternate. Residue Lys-32 is modified to N6-succinyllysine; alternate. Lys-32 is covalently cross-linked (Glycyl lysine isopeptide (Lys-Gly) (interchain with G-Cter in ubiquitin); alternate). 2 consecutive transmembrane segments (beta stranded) span residues Leu-38 to Ser-47 and Val-51 to Ser-59. Glycyl lysine isopeptide (Lys-Gly) (interchain with G-Cter in ubiquitin) cross-links involve residues Lys-65 and Lys-73. 4 beta stranded membrane-spanning segments follow: residues Val-66–Trp-76, Leu-81–Asn-88, Thr-92–Asp-101, and Leu-107–Ser-116. Residue Lys-121 is modified to N6-acetyllysine; alternate. Lys-121 participates in a covalent cross-link: Glycyl lysine isopeptide (Lys-Gly) (interchain with G-Cter in ubiquitin); alternate. Glycyl lysine isopeptide (Lys-Gly) (interchain with G-Cter in ubiquitin) cross-links involve residues Lys-122 and Lys-125. The next 4 beta stranded transmembrane spans lie at Ser-123–Arg-132, Ile-135–Asp-142, Ala-149–Gly-157, and Leu-162–Asp-170. Lys-173 participates in a covalent cross-link: Glycyl lysine isopeptide (Lys-Gly) (interchain with G-Cter in ubiquitin). 6 beta stranded membrane passes run Lys-175–Thr-187, Phe-190–Asn-197, Glu-201–Val-210, Phe-214–Thr-223, Arg-230–Leu-239, and Ala-243–Asn-250. At Ser-205 the chain carries Phosphoserine. Ser-252 carries the phosphoserine modification. NAD(+) is bound by residues Leu-254–Gly-256 and Ser-272–Asp-276. 2 beta stranded membrane passes run Leu-254–Leu-263 and Gly-266–Val-275. N6-acetyllysine; alternate is present on Lys-278. Lys-278 participates in a covalent cross-link: Glycyl lysine isopeptide (Lys-Gly) (interchain with G-Cter in ubiquitin); alternate. The chain crosses the membrane as a beta stranded span at residues His-285–Glu-294. Residue Lys-286 forms a Glycyl lysine isopeptide (Lys-Gly) (interchain with G-Cter in ubiquitin) linkage.

Belongs to the eukaryotic mitochondrial porin family. Monomer, homodimer and higher order oligomers; formation of higher order structures is necessary for scramblase activity. Interacts with ARMC12 in a TBC1D21-dependent manner. Interacts with KLC3. Interacts with SPATA33. Interacts with PPP3CC in a SPATA33-dependent manner. In terms of processing, ubiquitinated by PRKN during mitophagy, leading to its degradation and enhancement of mitophagy. Deubiquitinated by USP30.

Its subcellular location is the mitochondrion outer membrane. It localises to the membrane. The catalysed reaction is chloride(in) = chloride(out). It carries out the reaction K(+)(in) = K(+)(out). The enzyme catalyses a 1,2-diacyl-sn-glycero-3-phospho-L-serine(in) = a 1,2-diacyl-sn-glycero-3-phospho-L-serine(out). It catalyses the reaction a 1,2-diacyl-sn-glycero-3-phosphocholine(in) = a 1,2-diacyl-sn-glycero-3-phosphocholine(out). The catalysed reaction is a 1,2-diacyl-sn-glycero-3-phospho-(1D-myo-inositol)(in) = a 1,2-diacyl-sn-glycero-3-phospho-(1D-myo-inositol)(out). Non-selective voltage-gated ion channel that mediates the transport of anions and cations through the mitochondrion outer membrane and plasma membrane. The channel adopts an open conformation at zero mV and a closed conformation at both positive and negative potentials. There are two populations of channels; the main that functions in a lower open-state conductance with lower ion selectivity, that switch, in a voltage-dependent manner, from the open to a low-conducting 'closed' state and the other that has a normal ion selectivity in the typical high conductance, 'open' state. Binds various lipids, including the sphingolipid ceramide, the phospholipid phosphatidylcholine, and the sterols cholesterol and oxysterol. Binding of ceramide promotes the mitochondrial outer membrane permeabilization (MOMP) apoptotic pathway. Its function is as follows. Catalyzes the scrambling of phospholipids across the outer mitochondrial membrane; the mechanism is unrelated to channel activity and is capable of translocating both anionic and zwitterionic phospholipids. The chain is Non-selective voltage-gated ion channel VDAC2 from Mesocricetus auratus (Golden hamster).